The sequence spans 550 residues: CTP synthase (550 aa).

Positions 1 to 277 (MNGSADAGPR…GRAVERALGL (277 aa)) are amidoligase domain. Residue serine 23 coordinates CTP. A UTP-binding site is contributed by serine 23. Residue 24 to 29 (SLGKGI) participates in ATP binding. Residue tyrosine 64 coordinates L-glutamine. Residue aspartate 81 participates in ATP binding. 2 residues coordinate Mg(2+): aspartate 81 and glutamate 151. CTP-binding positions include 158 to 160 (DIE), 198 to 203 (KTKPTQ), and lysine 234. UTP is bound by residues 198–203 (KTKPTQ) and lysine 234. Valine 252 contacts ATP. A Glutamine amidotransferase type-1 domain is found at 302 to 549 (KIAIAGKYVK…VEAALAYQER (248 aa)). Glycine 364 is a binding site for L-glutamine. Catalysis depends on cysteine 391, which acts as the Nucleophile; for glutamine hydrolysis. Residues 392–395 (LGLQ), glutamate 415, and arginine 472 each bind L-glutamine. Residues histidine 522 and glutamate 524 contribute to the active site.

It belongs to the CTP synthase family. As to quaternary structure, homotetramer in the presence of UTP and ATP. Is in a protein concentration-dependent equilibrium between monomer, dimer, and tetramer in the absence of UTP and ATP.

It catalyses the reaction UTP + L-glutamine + ATP + H2O = CTP + L-glutamate + ADP + phosphate + 2 H(+). The catalysed reaction is L-glutamine + H2O = L-glutamate + NH4(+). The enzyme catalyses UTP + NH4(+) + ATP = CTP + ADP + phosphate + 2 H(+). It functions in the pathway pyrimidine metabolism; CTP biosynthesis via de novo pathway; CTP from UDP: step 2/2. With respect to regulation, allosterically activated by GTP, when glutamine is the substrate. GTP has no effect on the reaction when ammonia is the substrate. The allosteric effector GTP functions by stabilizing the protein conformation that binds the tetrahedral intermediate(s) formed during glutamine hydrolysis. Inhibited by the product CTP, via allosteric rather than competitive inhibition. Catalyzes the ATP-dependent amination of UTP to CTP with either L-glutamine or ammonia as the source of nitrogen. Regulates intracellular CTP levels through interactions with the four ribonucleotide triphosphates. In Thermus thermophilus (strain ATCC 27634 / DSM 579 / HB8), this protein is CTP synthase.